The chain runs to 207 residues: ADP-ribosylation factor (207 aa).

Residue Gly-2 is the site of N-myristoyl glycine attachment. GTP contacts are provided by residues 32–39 (GLDGAGKT), 75–79 (DIGGQ), and 133–136 (NKID).

It belongs to the small GTPase superfamily. Arf family.

Its subcellular location is the golgi apparatus. Its function is as follows. GTP-binding protein involved in protein trafficking; may modulate vesicle budding and uncoating within the Golgi apparatus. In Encephalitozoon cuniculi (strain GB-M1) (Microsporidian parasite), this protein is ADP-ribosylation factor (ARF-1).